Here is a 281-residue protein sequence, read N- to C-terminus: Acetyl-coenzyme A carboxylase carboxyl transferase subunit beta (281 aa).

In terms of domain architecture, CoA carboxyltransferase N-terminal spans 24 to 281 (GLWYKSPKGK…TKLLTMLANN (258 aa)).

It belongs to the AccD/PCCB family. Acetyl-CoA carboxylase is a heterohexamer composed of biotin carboxyl carrier protein (AccB), biotin carboxylase (AccC) and two subunits each of ACCase subunit alpha (AccA) and ACCase subunit beta (AccD).

It is found in the cytoplasm. The catalysed reaction is N(6)-carboxybiotinyl-L-lysyl-[protein] + acetyl-CoA = N(6)-biotinyl-L-lysyl-[protein] + malonyl-CoA. It participates in lipid metabolism; malonyl-CoA biosynthesis; malonyl-CoA from acetyl-CoA: step 1/1. Component of the acetyl coenzyme A carboxylase (ACC) complex. Biotin carboxylase (BC) catalyzes the carboxylation of biotin on its carrier protein (BCCP) and then the CO(2) group is transferred by the transcarboxylase to acetyl-CoA to form malonyl-CoA. The chain is Acetyl-coenzyme A carboxylase carboxyl transferase subunit beta from Amoebophilus asiaticus (strain 5a2).